A 485-amino-acid polypeptide reads, in one-letter code: MPITFKKIDKEDFLEIRKNFLENYKNLDDFDLNTAIRFHKSLPDHKNFQKKIEQSVQDNKIMTQAHSKETLLEDLIKNLNTFYRVGQADFLSIIIDSHTRENHYDNAKVILEDSIKSNKSLLNGFPLINYGTKLARKIINDVEVPLQIKHGSPDARLLVEVALLSGFSAFDGGGISHNIPFSKSISLKDSLENWKYVDRLVGIYEENGIKINREIFSPLTATLVPPAISNSIQILETLLAVEQGVKNISIGVAQYGNITQDIASLLALKEHIQFYLDTFSFKDINISTVFNQWIGGFPEEELKAYSLISYSTTIALFSKTNRIFVKNIDEYAKNSLGNTMINSLLLTKTILDIGNNQKINNYEEIIFEKEQIKKETAQIIAKIFSRCDGDLRKAIIEAFEYGVLDVPFAPSKYNLGKMMPARDSEGMIRYLDIGNLPFCPLIEEFHNKKIKERSMKENREINFQMTIDDIFAMSQGKLINKKSRE.

An L-glutamate-binding site is contributed by Arg-100. An adenosylcob(III)alamin-binding site is contributed by Asn-123. Residues 149–150 (KH) and Asp-171 each bind L-glutamate. Adenosylcob(III)alamin-binding residues include Pro-180, Phe-297, Lys-326, and Glu-330.

This sequence belongs to the methylaspartate mutase GlmE subunit family. In terms of assembly, heterotetramer composed of 2 epsilon subunits (GlmE) and 2 sigma subunits (GlmS). GlmE exists as a homodimer and GlmS as a monomer. Adenosylcob(III)alamin is required as a cofactor.

The catalysed reaction is (2S,3S)-3-methyl-L-aspartate = L-glutamate. It participates in amino-acid degradation; L-glutamate degradation via mesaconate pathway; acetate and pyruvate from L-glutamate: step 1/4. Catalyzes the carbon skeleton rearrangement of L-glutamate to L-threo-3-methylaspartate ((2S,3S)-3-methylaspartate). The chain is Glutamate mutase epsilon subunit from Fusobacterium nucleatum subsp. nucleatum (strain ATCC 25586 / DSM 15643 / BCRC 10681 / CIP 101130 / JCM 8532 / KCTC 2640 / LMG 13131 / VPI 4355).